Consider the following 199-residue polypeptide: MSRYTGPRHKLARRLGISLDGTGKDIKRNFPPGQHGHNNRRKLSEYGIQLQEKQKLRHMFGLNEKQFRRTFDNASKMAGVVGENFMKLLESRLDNLVYRMGFAPTRPAARQLVNHGHFLVNGKKVNIPSYRVQPGDVISIREKSRGLQLIKDALEGRTFLPNYVTFNDAAAEGTFTRLPDREEMPAEINEVLIVEFYSR.

The region spanning 91-154 is the S4 RNA-binding domain; that stretch reads SRLDNLVYRM…RGLQLIKDAL (64 aa).

The protein belongs to the universal ribosomal protein uS4 family. As to quaternary structure, part of the 30S ribosomal subunit. Contacts protein S5. The interaction surface between S4 and S5 is involved in control of translational fidelity.

Functionally, one of the primary rRNA binding proteins, it binds directly to 16S rRNA where it nucleates assembly of the body of the 30S subunit. Its function is as follows. With S5 and S12 plays an important role in translational accuracy. The protein is Small ribosomal subunit protein uS4 of Brevibacillus brevis (strain 47 / JCM 6285 / NBRC 100599).